The following is a 144-amino-acid chain: uncharacterized protein (144 aa).

The chain crosses the membrane as a helical span at residues 72–90 (VAIGTSLIVGAGVAMEVSV).

It to yeast YCL21w.

The protein localises to the membrane. This is an uncharacterized protein from Saccharomyces cerevisiae (strain ATCC 204508 / S288c) (Baker's yeast).